A 459-amino-acid chain; its full sequence is Bifunctional protein GlmU (459 aa).

The pyrophosphorylase stretch occupies residues 1 to 230 (MVKRYAVILA…FDETIGINDR (230 aa)). Residues 9–12 (LAAG), Lys23, Gln73, and 78–79 (GT) each bind UDP-N-acetyl-alpha-D-glucosamine. Residue Asp103 participates in Mg(2+) binding. The UDP-N-acetyl-alpha-D-glucosamine site is built by Gly140, Glu155, Asn170, and Asn228. A Mg(2+)-binding site is contributed by Asn228. Residues 231-251 (IALAEAERIMRDRICRQHMKN) form a linker region. Positions 252–459 (GVTIIDPACT…VDRLRGKKKS (208 aa)) are N-acetyltransferase. Arg333 and Lys351 together coordinate UDP-N-acetyl-alpha-D-glucosamine. His363 functions as the Proton acceptor in the catalytic mechanism. Positions 366 and 377 each coordinate UDP-N-acetyl-alpha-D-glucosamine. Residues 386–387 (NY), Ala423, and Arg440 contribute to the acetyl-CoA site.

It in the N-terminal section; belongs to the N-acetylglucosamine-1-phosphate uridyltransferase family. This sequence in the C-terminal section; belongs to the transferase hexapeptide repeat family. As to quaternary structure, homotrimer. Requires Mg(2+) as cofactor.

It is found in the cytoplasm. The catalysed reaction is alpha-D-glucosamine 1-phosphate + acetyl-CoA = N-acetyl-alpha-D-glucosamine 1-phosphate + CoA + H(+). It catalyses the reaction N-acetyl-alpha-D-glucosamine 1-phosphate + UTP + H(+) = UDP-N-acetyl-alpha-D-glucosamine + diphosphate. It participates in nucleotide-sugar biosynthesis; UDP-N-acetyl-alpha-D-glucosamine biosynthesis; N-acetyl-alpha-D-glucosamine 1-phosphate from alpha-D-glucosamine 6-phosphate (route II): step 2/2. Its pathway is nucleotide-sugar biosynthesis; UDP-N-acetyl-alpha-D-glucosamine biosynthesis; UDP-N-acetyl-alpha-D-glucosamine from N-acetyl-alpha-D-glucosamine 1-phosphate: step 1/1. It functions in the pathway bacterial outer membrane biogenesis; LPS lipid A biosynthesis. Its function is as follows. Catalyzes the last two sequential reactions in the de novo biosynthetic pathway for UDP-N-acetylglucosamine (UDP-GlcNAc). The C-terminal domain catalyzes the transfer of acetyl group from acetyl coenzyme A to glucosamine-1-phosphate (GlcN-1-P) to produce N-acetylglucosamine-1-phosphate (GlcNAc-1-P), which is converted into UDP-GlcNAc by the transfer of uridine 5-monophosphate (from uridine 5-triphosphate), a reaction catalyzed by the N-terminal domain. The polypeptide is Bifunctional protein GlmU (Geobacillus thermodenitrificans (strain NG80-2)).